Reading from the N-terminus, the 323-residue chain is Olfactory receptor 2T35 (323 aa).

Residues 1-26 are Extracellular-facing; it reads MGMEGLLQNSTNFVLTGLITHPAFPG. N-linked (GlcNAc...) asparagine glycosylation is present at Asn-9. A helical transmembrane segment spans residues 27–50; it reads LLFAVVFSIFVVAITANLVMILLI. Residues 51 to 58 are Cytoplasmic-facing; that stretch reads HMDSRLHT. A helical membrane pass occupies residues 59–80; that stretch reads PMYFLLSQLSIMDTIYICITVP. Over 81-101 the chain is Extracellular; sequence KMLQDLLSKDKTISFLGCAVQ. The cysteines at positions 98 and 189 are disulfide-linked. A helical membrane pass occupies residues 102–120; it reads IFYLTLIGGEFFLLGLMAY. Residues 121–139 are Cytoplasmic-facing; that stretch reads DRYVAVCNPLRYPLLMNRR. A helical membrane pass occupies residues 140–158; it reads VCLFMVVGSWVGGSLDGFM. Residues 159 to 195 lie on the Extracellular side of the membrane; that stretch reads LTPVTMSFPFCRSREINHFFCEIPAVLKLSCTDTSLY. A helical membrane pass occupies residues 196–219; it reads ETLMYACCVLMLLIPLSVISVSYT. Residues 220 to 236 lie on the Cytoplasmic side of the membrane; the sequence is HILLTVHRMNSAEGRRK. Residues 237 to 259 traverse the membrane as a helical segment; the sequence is AFATCSSHIMVVSVFYGAAFYTN. Topologically, residues 260 to 272 are extracellular; that stretch reads VLPHSYHTPEKDK. Residues 273 to 292 form a helical membrane-spanning segment; that stretch reads VVSAFYTILTPMLNPLIYSL. The Cytoplasmic segment spans residues 293-323; sequence RNKDVAAALRKVLGRCGSSQSIRVATVIRKG.

Belongs to the G-protein coupled receptor 1 family.

The protein localises to the cell membrane. Functionally, odorant receptor. The chain is Olfactory receptor 2T35 (OR2T35) from Homo sapiens (Human).